The following is a 353-amino-acid chain: Holliday junction branch migration complex subunit RuvB (353 aa).

Residues 4 to 186 (ADRLIAATHS…FGIVQRLEFY (183 aa)) form a large ATPase domain (RuvB-L) region. ATP contacts are provided by residues Ile25, Arg26, Gly67, Lys70, Thr71, Thr72, 133–135 (EDF), Arg176, Tyr186, and Arg223. Mg(2+) is bound at residue Thr71. Residues 187–257 (STADLATIVS…VADLALNLLD (71 aa)) are small ATPAse domain (RuvB-S). The tract at residues 260–353 (EHGFDHQDRR…VDEFLDAVDD (94 aa)) is head domain (RuvB-H). Residues Arg296, Arg315, and Arg320 each coordinate DNA.

The protein belongs to the RuvB family. Homohexamer. Forms an RuvA(8)-RuvB(12)-Holliday junction (HJ) complex. HJ DNA is sandwiched between 2 RuvA tetramers; dsDNA enters through RuvA and exits via RuvB. An RuvB hexamer assembles on each DNA strand where it exits the tetramer. Each RuvB hexamer is contacted by two RuvA subunits (via domain III) on 2 adjacent RuvB subunits; this complex drives branch migration. In the full resolvosome a probable DNA-RuvA(4)-RuvB(12)-RuvC(2) complex forms which resolves the HJ.

Its subcellular location is the cytoplasm. It catalyses the reaction ATP + H2O = ADP + phosphate + H(+). Its function is as follows. The RuvA-RuvB-RuvC complex processes Holliday junction (HJ) DNA during genetic recombination and DNA repair, while the RuvA-RuvB complex plays an important role in the rescue of blocked DNA replication forks via replication fork reversal (RFR). RuvA specifically binds to HJ cruciform DNA, conferring on it an open structure. The RuvB hexamer acts as an ATP-dependent pump, pulling dsDNA into and through the RuvAB complex. RuvB forms 2 homohexamers on either side of HJ DNA bound by 1 or 2 RuvA tetramers; 4 subunits per hexamer contact DNA at a time. Coordinated motions by a converter formed by DNA-disengaged RuvB subunits stimulates ATP hydrolysis and nucleotide exchange. Immobilization of the converter enables RuvB to convert the ATP-contained energy into a lever motion, pulling 2 nucleotides of DNA out of the RuvA tetramer per ATP hydrolyzed, thus driving DNA branch migration. The RuvB motors rotate together with the DNA substrate, which together with the progressing nucleotide cycle form the mechanistic basis for DNA recombination by continuous HJ branch migration. Branch migration allows RuvC to scan DNA until it finds its consensus sequence, where it cleaves and resolves cruciform DNA. The polypeptide is Holliday junction branch migration complex subunit RuvB (Pseudomonas fluorescens (strain Pf0-1)).